Here is a 1538-residue protein sequence, read N- to C-terminus: Myosin-9 (1538 aa).

Residues 16-65 enclose the Myosin N-terminal SH3-like domain; that stretch reads SIGSHVWFEDPEVAWIDGEVEKINGQEVVIQATTGKKVTAKLSKIYPKDV. The Myosin motor domain maps to 70–740; the sequence is GGVDDMTKLS…QMAELDARRA (671 aa). ATP contacts are provided by residues 164–171 and 217–225; these read GESGAGKT and NNNSSRFGK. Actin-binding stretches follow at residues 503–537, 539–562, 597–621, and 621–643; these read LIEK…YQTF, THKR…AGEV, FPPL…KLQL, and LQQL…KPNN. IQ domains follow at residues 743–772, 766–795, 791–820, 814–843, 839–868, and 862–891; these read LSSA…ATIS, LRKA…EAAA, REAA…ASLV, LHVA…TKAA, QTKA…GVVL, and LKNG…AARE. Positions 892–1064 form a coiled coil; sequence TGALKEAKDM…VLRQQAVSMA (173 aa). The segment covering 1017 to 1032 has biased composition (basic and acidic residues); the sequence is SLEDKKKKLEETEKKG. Disordered stretches follow at residues 1017-1041 and 1098-1121; these read SLED…SLTR and SHSI…NEKQ. Positions 1168-1481 constitute a Dilute domain; the sequence is DRIIQTIGHA…IANMRVLMTE (314 aa).

It belongs to the TRAFAC class myosin-kinesin ATPase superfamily. Myosin family. Plant myosin class XI subfamily. As to quaternary structure, homodimer.

Functionally, myosin heavy chain that is required for the cell cycle-regulated transport of various organelles and proteins for their segregation. Functions by binding with its tail domain to receptor proteins on organelles and exerting force with its N-terminal motor domain against actin filaments, thereby transporting its cargo along polarized actin cables. Involved in trafficking of Golgi stacks and mitochondria. The sequence is that of Myosin-9 (XI-C) from Arabidopsis thaliana (Mouse-ear cress).